The primary structure comprises 294 residues: N-acetylmuramic acid 6-phosphate etherase (294 aa).

The SIS domain occupies valine 54–lysine 217. The active-site Proton donor is glutamate 82. Residue glutamate 113 is part of the active site.

It belongs to the GCKR-like family. MurNAc-6-P etherase subfamily. As to quaternary structure, homodimer.

The enzyme catalyses N-acetyl-D-muramate 6-phosphate + H2O = N-acetyl-D-glucosamine 6-phosphate + (R)-lactate. The protein operates within amino-sugar metabolism; N-acetylmuramate degradation. Functionally, specifically catalyzes the cleavage of the D-lactyl ether substituent of MurNAc 6-phosphate, producing GlcNAc 6-phosphate and D-lactate. This chain is N-acetylmuramic acid 6-phosphate etherase, found in Bacillus cereus (strain AH187).